The following is a 273-amino-acid chain: Undecaprenyl-diphosphatase (273 aa).

The next 9 helical transmembrane spans lie at 1 to 21 (MEPIQGVVLGIIQGLTEFLPV), 39 to 59 (PALFFDVSLHMGTLLAVLIVF), 63 to 83 (LGMMAVSVGRGIVAMFGGIAP), 92 to 112 (LKLALLIVVGSVPTAILGLGL), 118 to 138 (LFFSLPLVGAMLLVTGTLLWL), 165 to 185 (GLAVLPGISRSGATIAAGLFL), 195 to 215 (FSFLLCIPAIVGAELLSAVDL), 225 to 245 (ATVLGSLTAFVVGYGALKVLI), and 252 to 272 (RFYLFAPYCFILGGVTLWIGM).

It belongs to the UppP family.

Its subcellular location is the cell inner membrane. It catalyses the reaction di-trans,octa-cis-undecaprenyl diphosphate + H2O = di-trans,octa-cis-undecaprenyl phosphate + phosphate + H(+). In terms of biological role, catalyzes the dephosphorylation of undecaprenyl diphosphate (UPP). Confers resistance to bacitracin. The polypeptide is Undecaprenyl-diphosphatase (Desulfosudis oleivorans (strain DSM 6200 / JCM 39069 / Hxd3) (Desulfococcus oleovorans)).